A 586-amino-acid polypeptide reads, in one-letter code: ATPase family AAA domain-containing protein 3 (586 aa).

The segment at 1-52 (MSWLFGIKGSKGEGTGPPLPLPPVQPGGEGSGDGGAGDRPGPKDKWSNFDPT) is disordered. Position 2 is an N-acetylserine (Ser-2). A required for interaction with the inner surface of the mitochondrial outer membrane region spans residues 2-49 (SWLFGIKGSKGEGTGPPLPLPPVQPGGEGSGDGGAGDRPGPKDKWSNF). Residues 2–245 (SWLFGIKGSK…FRAFVTDWDK (244 aa)) lie on the Mitochondrial intermembrane side of the membrane. Positions 27-38 (GGEGSGDGGAGD) are enriched in gly residues. Positions 55-218 (ERAAKAAREL…QIRLKAAEHR (164 aa)) form a coiled coil. Residues 246-262 (VTATVAGLTLLAVGIYS) form a helical membrane-spanning segment. At 263-586 (AKNATSVAGR…QPPTLRTQAE (324 aa)) the chain is on the mitochondrial matrix side. The S100B-binding stretch occupies residues 289–304 (RITVLEALRHPIQVSR). Residue 351–358 (GPPGTGKT) coordinates ATP. N6-acetyllysine; alternate is present on Lys-490. Position 490 is an N6-succinyllysine; alternate (Lys-490). N6-acetyllysine occurs at positions 494 and 512.

This sequence belongs to the AAA ATPase family. As to quaternary structure, can form homooligomers. Homodimer formation at the N-terminus may be regulated by ATP and is required for the interaction with the inner surface of the mitochondrial outer membrane and correct mitochondrial homeostasis. Interacts with components of the mitochondrial ribosome and with other proteins involved in mitochondrial RNA metabolism. May also interact with protein involved in lipid metabolism, including STARD9. May interact with FAM210A. Interacts with GADD45GIP1. Interacts with S100B in a Ca(+2)- and Zn(+2)-dependent manner; this interaction probably occurs in the cytosol prior to mitochondrial targeting. S100B could assist ATAD3A cytoplasmic processing, preventing aggregation and favoring mitochondrial localization. Interacts with HSP60/HSPD1. Forms heterooligomers with ATAD3B; this interaction may affect ATAD3A activity. Interacts with CLPB.

The protein localises to the mitochondrion inner membrane. Its subcellular location is the mitochondrion matrix. The protein resides in the mitochondrion nucleoid. Functionally, essential for mitochondrial network organization, mitochondrial metabolism and cell growth at organism and cellular level. May play an important role in mitochondrial protein synthesis. May also participate in mitochondrial DNA replication. May bind to mitochondrial DNA D-loops and contribute to nucleoid stability. Required for enhanced channeling of cholesterol for hormone-dependent steroidogenesis. Involved in mitochondrial-mediated antiviral innate immunity. Also involved in the mitochondrial DNA damage response by promoting signaling between damaged genomes and the mitochondrial membrane, leading to activation of the integrated stress response (ISR). In Bos taurus (Bovine), this protein is ATPase family AAA domain-containing protein 3 (ATAD3).